The chain runs to 256 residues: Putative F-box protein At3g51171 (256 aa).

Positions 1 to 44 (MVPLPWELEEDILSRLAAQSLVRFRSVCKRWNYLFDEKSFIKNH) constitute an F-box domain.

This Arabidopsis thaliana (Mouse-ear cress) protein is Putative F-box protein At3g51171.